Consider the following 503-residue polypeptide: MALRAKAEVCMAVPWLSLQRAQALGTRAARVPRTVLPFEAMPRRPGNRWLRLLQIWREQGYEDLHLEVHQTFQELGPIFRYDLGGAGMVCVMLPEDVEKLQQVDSLHPHRMSLEPWVAYRQHRGHKCGVFLLNGPEWRFNRLRLNPEVLSPNAVQRFLPMVDAVARDFSQALKKKVLQNARGSLTLDVQPSIFHYTIEASNLALFGERLGLVGHSPSSASLNFLHALEVMFKSTVQLMFMPRSLSRWTSPKVWKEHFEAWDCIFQYGDNCIQKIYQELAFSRPQQYTSIVAELLLNAELSPDAIKANSMELTAGSVDTTVFPLLMTLFELARNPNVQQALRQESLAAAASISEHPQKATTELPLLRAALKETLRLYPVGLFLERVASSDLVLQNYHIPAGTLVRVFLYSLGRNPALFPRPERYNPQRWLDIRGSGRNFYHVPFGFGMRQCLGRRLAEAEMLLLLHHVLKHLQVETLTQEDIKMVYSFILRPSMFPLLTFRAIN.

The transit peptide at 1–24 directs the protein to the mitochondrion; sequence MALRAKAEVCMAVPWLSLQRAQAL. Cysteine 450 contributes to the heme binding site.

This sequence belongs to the cytochrome P450 family. Requires heme as cofactor. Expressed in the zona fasciculata/reticularis of the adrenal cortex.

It is found in the mitochondrion inner membrane. The catalysed reaction is a steroid + 2 reduced [adrenodoxin] + O2 + 2 H(+) = an 11beta-hydroxysteroid + 2 oxidized [adrenodoxin] + H2O. The enzyme catalyses 11-deoxycortisol + 2 reduced [adrenodoxin] + O2 + 2 H(+) = cortisol + 2 oxidized [adrenodoxin] + H2O. It carries out the reaction 21-hydroxyprogesterone + 2 reduced [adrenodoxin] + O2 + 2 H(+) = corticosterone + 2 oxidized [adrenodoxin] + H2O. Its pathway is steroid biosynthesis; glucocorticoid biosynthesis. It functions in the pathway steroid hormone biosynthesis. Its function is as follows. A cytochrome P450 monooxygenase involved in the biosynthesis of adrenal corticoids. Catalyzes a variety of reactions that are essential for many species, including detoxification, defense, and the formation of endogenous chemicals like steroid hormones. Steroid 11beta, 18- and 19-hydroxylase with preferred regioselectivity at 11beta, then 18, and lastly 19. Catalyzes the hydroxylation of 11-deoxycortisol and 11-deoxycorticosterone (21-hydroxyprogesterone) at 11beta position, yielding cortisol or corticosterone, respectively, but cannot produce aldosterone. Mechanistically, uses molecular oxygen inserting one oxygen atom into a substrate for hydroxylation and reducing the second into a water molecule. Two electrons are provided by NADPH via a two-protein mitochondrial transfer system comprising flavoprotein FDXR (adrenodoxin/ferredoxin reductase) and nonheme iron-sulfur protein FDX1 or FDX2 (adrenodoxin/ferredoxin). Due to its lack of 18-oxidation activity, it is incapable of generating aldosterone. Could also be involved in the androgen metabolic pathway. In Homo sapiens (Human), this protein is Cytochrome P450 11B1, mitochondrial.